Reading from the N-terminus, the 226-residue chain is Survival motor neuron protein (226 aa).

Over residues 35–44 (ADSTNKREEE) the composition is skewed to basic and acidic residues. The tract at residues 35-68 (ADSTNKREEENAAAAEEEAGEISATGGATSPEPV) is disordered. A Tudor domain is found at 69 to 128 (SFKVGDYARATYVDGVDYEGAVVSINEEKGTCVLRYLGYENEQEVLLVDLLPSWGKRVRR). Residues 137–172 (DEDEQLSRPKASAGSHSKTPKSSRRSRISGGLVMPP) are disordered. Positions 154–163 (KTPKSSRRSR) are enriched in basic residues. Residues 159–226 (SRRSRISGGL…TSGKKKTPKK (68 aa)) form a required for homodimerization region.

The protein belongs to the SMN family. Homodimer (via C-terminal region). Component of the core survival motor neuron (SMN) complex composed of Smn, Gem2, Gem3, rig/Gem5 and one of 3 almost identical Gem4 paralogs encoded by Glos/Gem4a, Gem4b or Gem4c. Interacts with Gem3 (via C-terminus); the interaction is direct and stabilizes Smn. Part of a minimal SMN complex composed of Smn and Gem2 only; this complex is active in UsnRNP assembly. The SMN complex associates with the entire set of spliceosomal snRNP Sm proteins, SmB, SmD1, SmD2, SmD3, SmE, SmF and SmG, and with the snRNP-specific proteins snRNP-U1-70K, U2A, snf/U1A and U5-116KD. Interacts with Glos/Gem4a; the interaction is probably indirect. Interacts with Sbat and Vlet; Sbat and Vlet, along with Hez, may form an accessory subcomplex involved in SMN complex function. Interacts weakly with Gem3. Interacts with SmB and SmD1; the interaction is favored by methylation of the Sm proteins. Interacts with Actn; the interaction occurs in thoracic tissues and in adult flies. Interacts with Rpp20. Interacts with msk and Snup; these interactions are RNA-dependent. In terms of tissue distribution, in late first instar larvae, expressed in pNBs. Expression increases as the pNBs enlarge, with the highest accumulation observed in dividing pNBs of second and third instar larvae. Enriched in type ID (thoracic and brain lobe), type IA and all the mira-expressing NBs of the brain lobes. In larvae, also expressed in muscle fibers. In larval and adult testis, expressed in germline stem cells and gonialblast, expression decreases as cells differentiate into cysts and spermatocytes. In adult fly thorax, expressed in the IFMs. In adult ovary, expressed in germline stem cells, cystoblasts, follicle cells, nurse cells and oocyte (at protein level). Also expressed in larval salivary glands.

Its subcellular location is the cytoplasm. The protein localises to the nucleus. The protein resides in the U-body. It is found in the gem. It localises to the cajal body. Its subcellular location is the myofibril. The protein localises to the sarcomere. The protein resides in the i band. It is found in the z line. In terms of biological role, core component of the survival motor neuron (SMN) complex that plays an essential role in spliceosomal small nuclear ribonucleoprotein (snRNP) assembly in the cytoplasm, is required for pre-mRNA splicing in the nucleus and acts as a chaperone that discriminates target and non-target RNAs of Sm proteins. A major component of nuclear bodies known as gems (gemini of Cajal bodies) thought to be storage depots of excess SMN complexes. Required for normal expression of spliceosomal snRNAs and for U12 intron splicing. Required in cholinergic neurons, but not in motor neurons, to ensure correct splicing and proper levels of stas mRNA and normal neurotransmitter release by motor neurons. However, Smn is required in motor neurons, but not in cholinergic neurons, for normal motor behavior but plays no role in synaptic transmission according to a report. In both muscle and neurons, required for the formation of a normal neuromuscular junction (NMJ) structure. Plays a neuron-specific role in long-term homeostatic compensation at the larval NMJ. In the thorax of adult flies, required for Act88F, an indirect flight muscle (IFM)-specific actin, expression and for proper IFM myofibril formation. In nurse cells, oocytes and follicle cells, required to maintain normal organization of nuclear compartments including chromosomes, nucleoli, Cajal bodies, histone locus bodies and heterochromatin. Required for the functional integrity of the cytoplasmic U snRNP body (U body) and P body. Required in dividing postembryonic neuroblasts (pNBs) for the correct basal localization of mira. The tight regulation of its expression is critical for stem cell division, proliferation and differentiation in male germline and developing central nervous system (CNS). Required for tracheal terminal cell lumen formation. The polypeptide is Survival motor neuron protein (Drosophila melanogaster (Fruit fly)).